Reading from the N-terminus, the 468-residue chain is Argininosuccinate lyase (468 aa).

Belongs to the lyase 1 family. Argininosuccinate lyase subfamily.

Its subcellular location is the cytoplasm. It catalyses the reaction 2-(N(omega)-L-arginino)succinate = fumarate + L-arginine. It functions in the pathway amino-acid biosynthesis; L-arginine biosynthesis; L-arginine from L-ornithine and carbamoyl phosphate: step 3/3. This Paraburkholderia phymatum (strain DSM 17167 / CIP 108236 / LMG 21445 / STM815) (Burkholderia phymatum) protein is Argininosuccinate lyase.